A 292-amino-acid polypeptide reads, in one-letter code: Protease HtpX (292 aa).

A run of 2 helical transmembrane segments spans residues 5–25 (VVLF…VMSV) and 35–55 (GLLV…LLLS). Residue His-140 coordinates Zn(2+). The active site involves Glu-141. Zn(2+) is bound at residue His-144. Transmembrane regions (helical) follow at residues 155–175 (LLQG…GGII) and 193–213 (IIVF…AMWF). Residue Glu-218 participates in Zn(2+) binding.

It belongs to the peptidase M48B family. It depends on Zn(2+) as a cofactor.

The protein localises to the cell inner membrane. This Xanthomonas campestris pv. campestris (strain 8004) protein is Protease HtpX.